We begin with the raw amino-acid sequence, 149 residues long: Transcriptional repressor NrdR (149 aa).

A zinc finger spans residues 3-34 (CPFCAAEETKVVDSRLAADGYQIRRRRECTSC). An ATP-cone domain is found at 49-139 (PYVIKNNGNR…VYLSFDDIEE (91 aa)).

Belongs to the NrdR family. It depends on Zn(2+) as a cofactor.

In terms of biological role, negatively regulates transcription of bacterial ribonucleotide reductase nrd genes and operons by binding to NrdR-boxes. In Actinobacillus pleuropneumoniae serotype 3 (strain JL03), this protein is Transcriptional repressor NrdR.